Reading from the N-terminus, the 129-residue chain is Phosphomevalonate dehydratase small subunit (129 aa).

Ser-61 acts as the Proton acceptor in catalysis.

Belongs to the AcnX type II small subunit family. Heterodimer composed of a large subunit (PMDh-L) and a small subunit (PMDh-S).

It carries out the reaction (R)-5-phosphomevalonate = (2E)-3-methyl-5-phosphooxypent-2-enoate + H2O. It participates in isoprenoid biosynthesis; isopentenyl diphosphate biosynthesis via mevalonate pathway. In terms of biological role, component of a hydro-lyase that catalyzes the dehydration of mevalonate 5-phosphate (MVA5P) to form trans-anhydromevalonate 5-phosphate (tAHMP). Involved in the archaeal mevalonate (MVA) pathway, which provides fundamental precursors for isoprenoid biosynthesis, such as isopentenyl diphosphate (IPP) and dimethylallyl diphosphate (DMAPP). This is Phosphomevalonate dehydratase small subunit from Methanocaldococcus jannaschii (strain ATCC 43067 / DSM 2661 / JAL-1 / JCM 10045 / NBRC 100440) (Methanococcus jannaschii).